The primary structure comprises 350 residues: Probable arabinogalactan endo-beta-1,4-galactanase A (350 aa).

The N-terminal stretch at 1-16 (MIYSLLLSALPLLSSA) is a signal peptide. A glycan (N-linked (GlcNAc...) asparagine) is linked at Asn128. Residue Glu152 is the Proton donor of the active site. Glu262 (nucleophile) is an active-site residue.

It belongs to the glycosyl hydrolase 53 family.

It localises to the secreted. The enzyme catalyses The enzyme specifically hydrolyzes (1-&gt;4)-beta-D-galactosidic linkages in type I arabinogalactans.. Functionally, endogalactanase involved in the degradation of plant cell wall polysaccharides, and more particularly of hairy regions of pectin. This chain is Probable arabinogalactan endo-beta-1,4-galactanase A (galA), found in Aspergillus niger (strain ATCC MYA-4892 / CBS 513.88 / FGSC A1513).